The chain runs to 503 residues: Maturase K (503 aa).

The protein belongs to the intron maturase 2 family. MatK subfamily.

It is found in the plastid. The protein resides in the chloroplast. Its function is as follows. Usually encoded in the trnK tRNA gene intron. Probably assists in splicing its own and other chloroplast group II introns. In Eucalyptus globulus (Tasmanian blue gum), this protein is Maturase K.